The primary structure comprises 1612 residues: MPSKTICDQVIPPNVRDRVQELDGDLNDGLITEKGYVKKKSKILFEHLSPDIQTKLKGLEDELKDEELTEKGYLNKVQSILAKFIETCSPVNGDTKEEASSNGKDDEKAESTVANGTTSNGSTTNGSSGSSKANGHTNGGYVQSSSQEETGTSQSEEEMDMDTPTSGKGGSKKKKKSKGSGGGDAGKGRKRKVLGDDERDGVEKKEGEKKDVEGEEGEEAKEESATPDEKTLRTSKRKRSPKADAKQPSIMSMFTKKPAKKEEEKMEESSSMEVDKKEMENGDNGKKEEEEPSGPGGKRIKKEEEEEEKAKVEPMSPSRDLRHKANHETAESKQPPLRCKECRQLLDDPDLKIFPGDPEDAREEYITLTDPRLSLLTGDEGDAMSYDERLQHKITNFCVYDKSTHICAFDRGMIEKNKELYFSGYVKPIYDDNPSTEGGIPTKRIGPINEWYTTGFDGGHKALIGFSTAFAEYIVMSPSEEYKPFWTAVQEKIYMSKILIEFLQNNVDPVYEDLLTQIETTVPPEGCNRFTEDSLLRHAQFVVEQVESYDDAADRDEVLLITMPCMRDLIKLAGVTLGKRRAARKAAAVKKDKKPVFTMATVTPLVSHIFDAIFKDQIADEMKAAASERKKRCGVCEICQAPDCGKCTACKDMIKFGGSGKAKQACKDRRCPNMAVQEADENDIDEMDNSSNKENKDEKKAKKGRKLETPLKKKKRAKVTWLDEPTEVTEERAYYKAAMLDDEKIEIGDCVLIHPDDPTKPLFMARVIYMWQESQGEMMFHAQWFVYGSETVLGETSDPLEVFPIDECQDTYLGSVNAKCTVIYKAPPNDWSMIGGIDDPETDHVIKEDDGKTFFYQKWYDPELARFEDYEVLMAPDDIPAHRFCSCCLKNERAQEKETARPGAKLEDQDDSSKVLYSSWHYKGNEFQIGDGVYLLPEVFSFNIKQKVVTKKPVSKKDVDEDLYPENYRKSSEYVKGSNLECPEPFRIGKIISIYTTKSNSTVRLRVNKMYRPEDTHKGRTAAYQADLNVLYWSEEEAVTELEVVQGKCSVVCAEDLNVSTDEYSAGGPHKFYFREAYDSERKCFEDPPSKSRSTRMKGKGKGKGKGKAKGKIAVEKEEEKESTETPFNKLKCLDVFAGCGGLSEGFHQAGICESSWAIEKEEPAAQAYRLNNPGSTVFSDDCNELLRLVMQGEKTSRTGQKLPQKGDVELLCGGPPCQGFSGMNRFNSREYSKFKNSLISSYLSYCDYYRPRFFLLENVRNFVSYKKNMVLKLALRCLIRMGYQCTFGILQAGQYGVPQTRRRAIILAAAPGEKLPFYPEPLHVFSSRACSLSVMIGEKKIESNNQWCLSAPYRTITVRDTMSDLPTINNGAQKLEISYDGEPQSDFQKKIRGNQYQPILRDHICKDMSSLVAARMKHIPLAPGSDWRDLPNIPVTLKDGTTCRKLRYTHKDKKNGKSSTGALRGVCSCAEGDACDPSDRQFSTLIPWCLPHTGNRHNNWAGLYGRLEWDGFFSTTVTNPEPMGKQGRVLHPEQHRVVSVRECARSQGFPDTYRFFGSILDKHRQIGNAVPPPMAAAIGMEIKVCLQTKTKRDQERAALEPVKEETEESMD.

Positions 7 to 101 constitute a DMAP1-binding domain; sequence CDQVIPPNVR…NGDTKEEASS (95 aa). Residues 87-338 form a disordered region; the sequence is TCSPVNGDTK…TAESKQPPLR (252 aa). Residues 94–110 show a composition bias toward basic and acidic residues; it reads DTKEEASSNGKDDEKAE. Residues 115-131 show a composition bias toward low complexity; it reads NGTTSNGSTTNGSSGSS. Positions 132–142 are enriched in polar residues; it reads KANGHTNGGYV. Residues 143–154 are compositionally biased toward low complexity; the sequence is QSSSQEETGTSQ. Basic and acidic residues-rich tracts occupy residues 193-212, 222-232, and 260-289; these read VLGD…KKDV, EESATPDEKTL, and KKEE…KKEE. The CXXC-type zinc-finger motif lies at 626-672; the sequence is ASERKKRCGVCEICQAPDCGKCTACKDMIKFGGSGKAKQACKDRRCP. Positions 633, 636, 639, 644, 647, 650, 666, and 671 each coordinate Zn(2+). The segment at 677–708 is disordered; that stretch reads QEADENDIDEMDNSSNKENKDEKKAKKGRKLE. The segment covering 678-688 has biased composition (acidic residues); the sequence is EADENDIDEMD. Positions 691–708 are enriched in basic and acidic residues; it reads SNKENKDEKKAKKGRKLE. BAH domains follow at residues 743 to 871 and 967 to 1089; these read EKIE…EDYE and NYRK…EDPP. Positions 1084–1121 are disordered; that stretch reads CFEDPPSKSRSTRMKGKGKGKGKGKAKGKIAVEKEEEK. The segment covering 1093-1111 has biased composition (basic residues); the sequence is RSTRMKGKGKGKGKGKAKG. The SAM-dependent MTase C5-type domain occupies 1131–1590; it reads LKCLDVFAGC…MEIKVCLQTK (460 aa). S-adenosyl-L-methionine is bound by residues 1142-1143, 1160-1161, 1182-1183, and cysteine 1183; these read GL, EK, and DC. Cysteine 1218 is an active-site residue. S-adenosyl-L-methionine contacts are provided by asparagine 1569 and valine 1571.

Belongs to the class I-like SAM-binding methyltransferase superfamily. C5-methyltransferase family.

The protein localises to the nucleus. It catalyses the reaction a 2'-deoxycytidine in DNA + S-adenosyl-L-methionine = a 5-methyl-2'-deoxycytidine in DNA + S-adenosyl-L-homocysteine + H(+). Functionally, methylates CpG residues. This Paracentrotus lividus (Common sea urchin) protein is DNA (cytosine-5)-methyltransferase PliMCI (DNMT).